A 150-amino-acid chain; its full sequence is 3-dehydroquinate dehydratase (150 aa).

The active-site Proton acceptor is the tyrosine 26. Positions 77, 83, and 90 each coordinate substrate. The active-site Proton donor is the histidine 103. Residues 104–105 (IS) and arginine 114 each bind substrate.

This sequence belongs to the type-II 3-dehydroquinase family. In terms of assembly, homododecamer.

It catalyses the reaction 3-dehydroquinate = 3-dehydroshikimate + H2O. It functions in the pathway metabolic intermediate biosynthesis; chorismate biosynthesis; chorismate from D-erythrose 4-phosphate and phosphoenolpyruvate: step 3/7. Catalyzes a trans-dehydration via an enolate intermediate. The protein is 3-dehydroquinate dehydratase of Buchnera aphidicola subsp. Acyrthosiphon pisum (strain 5A).